The sequence spans 350 residues: Ubiquitin carboxyl-terminal hydrolase 11 (350 aa).

The USP domain occupies 49–344 (KGLYNVSGND…SACLLFYEME (296 aa)). Cys-59 (nucleophile) is an active-site residue. His-302 (proton acceptor) is an active-site residue.

This sequence belongs to the peptidase C19 family.

The enzyme catalyses Thiol-dependent hydrolysis of ester, thioester, amide, peptide and isopeptide bonds formed by the C-terminal Gly of ubiquitin (a 76-residue protein attached to proteins as an intracellular targeting signal).. The sequence is that of Ubiquitin carboxyl-terminal hydrolase 11 (ubp11) from Schizosaccharomyces pombe (strain 972 / ATCC 24843) (Fission yeast).